The primary structure comprises 823 residues: Apoptosis-resistant E3 ubiquitin protein ligase 1 (823 aa).

The stretch at 64–158 is one Filamin repeat; the sequence is WDWKDPYEVG…VAYSPYYKIF (95 aa). The tract at residues 315 to 345 is disordered; it reads PPMHMSSSQRRPSTAIEEDDEDSPSECHTPE. The segment at 483-789 is interaction with SOCS2; the sequence is SISDWSKNFE…THSTLPTAHT (307 aa). Positions 483–823 constitute an HECT domain; it reads SISDWSKNFE…SEGCEGFGML (341 aa). C790 (glycyl thioester intermediate) is an active-site residue.

In terms of assembly, interacts with SOCS2. Interacts (via HECT domain) with HTRA2, DIABLO/SMAC and SEPTIN4; in the cytoplasm following induction of apoptosis. Post-translationally, autoubiquitinated in vitro in the presence of E2 enzyme UBE2D1/UBCH5A. In terms of tissue distribution, detected in brain, testis, heart, liver, lung and kidney with very low levels in skeletal muscle and spleen.

The enzyme catalyses S-ubiquitinyl-[E2 ubiquitin-conjugating enzyme]-L-cysteine + [acceptor protein]-L-lysine = [E2 ubiquitin-conjugating enzyme]-L-cysteine + N(6)-ubiquitinyl-[acceptor protein]-L-lysine.. Its pathway is protein modification; protein ubiquitination. In terms of biological role, E3 ubiquitin-protein ligase that catalyzes 'Lys-11'- or 'Lys-33'-linked polyubiquitin chains, with some preference for 'Lys-33' linkages. E3 ubiquitin-protein ligases accept ubiquitin from an E2 ubiquitin-conjugating enzyme in the form of a thioester and then directly transfers the ubiquitin to targeted substrates. Ubiquitinates SEPTIN4, DIABLO/SMAC and HTRA2 in vitro. Modulates pulmonary inflammation by targeting SOCS2 for ubiquitination and subsequent degradation by the proteasome. This chain is Apoptosis-resistant E3 ubiquitin protein ligase 1 (Arel1), found in Mus musculus (Mouse).